The chain runs to 433 residues: Signal recognition particle 54 kDa protein (433 aa).

Residues 106-113 (GVEGSGKT), 186-190 (DTAGR), and 244-247 (TKMD) contribute to the GTP site.

The protein belongs to the GTP-binding SRP family. SRP54 subfamily. In terms of assembly, part of the signal recognition particle protein translocation system, which is composed of SRP and FtsY. Archaeal SRP consists of a 7S RNA molecule of 300 nucleotides and two protein subunits: SRP54 and SRP19.

The protein localises to the cytoplasm. It carries out the reaction GTP + H2O = GDP + phosphate + H(+). Its function is as follows. Involved in targeting and insertion of nascent membrane proteins into the cytoplasmic membrane. Binds to the hydrophobic signal sequence of the ribosome-nascent chain (RNC) as it emerges from the ribosomes. The SRP-RNC complex is then targeted to the cytoplasmic membrane where it interacts with the SRP receptor FtsY. This Pyrobaculum neutrophilum (strain DSM 2338 / JCM 9278 / NBRC 100436 / V24Sta) (Thermoproteus neutrophilus) protein is Signal recognition particle 54 kDa protein.